A 582-amino-acid polypeptide reads, in one-letter code: Threonine--tRNA ligase (582 aa).

The tract at residues 185 to 478 is catalytic; sequence DHRKLGKELE…LTEQYGGAFP (294 aa). Residues Cys-278, His-329, and His-455 each contribute to the Zn(2+) site.

It belongs to the class-II aminoacyl-tRNA synthetase family. Homodimer. The cofactor is Zn(2+).

The protein resides in the cytoplasm. It catalyses the reaction tRNA(Thr) + L-threonine + ATP = L-threonyl-tRNA(Thr) + AMP + diphosphate + H(+). Functionally, catalyzes the attachment of threonine to tRNA(Thr) in a two-step reaction: L-threonine is first activated by ATP to form Thr-AMP and then transferred to the acceptor end of tRNA(Thr). Also edits incorrectly charged L-seryl-tRNA(Thr). The polypeptide is Threonine--tRNA ligase (Dehalococcoides mccartyi (strain ATCC BAA-2100 / JCM 16839 / KCTC 5957 / BAV1)).